The sequence spans 82 residues: Exodeoxyribonuclease 7 small subunit (82 aa).

Belongs to the XseB family. Heterooligomer composed of large and small subunits.

Its subcellular location is the cytoplasm. The catalysed reaction is Exonucleolytic cleavage in either 5'- to 3'- or 3'- to 5'-direction to yield nucleoside 5'-phosphates.. Its function is as follows. Bidirectionally degrades single-stranded DNA into large acid-insoluble oligonucleotides, which are then degraded further into small acid-soluble oligonucleotides. This Colwellia psychrerythraea (strain 34H / ATCC BAA-681) (Vibrio psychroerythus) protein is Exodeoxyribonuclease 7 small subunit.